Reading from the N-terminus, the 510-residue chain is ATP synthase subunit alpha (510 aa).

169-176 contributes to the ATP binding site; the sequence is GDRQTGKT.

The protein belongs to the ATPase alpha/beta chains family. F-type ATPases have 2 components, CF(1) - the catalytic core - and CF(0) - the membrane proton channel. CF(1) has five subunits: alpha(3), beta(3), gamma(1), delta(1), epsilon(1). CF(0) has three main subunits: a(1), b(2) and c(9-12). The alpha and beta chains form an alternating ring which encloses part of the gamma chain. CF(1) is attached to CF(0) by a central stalk formed by the gamma and epsilon chains, while a peripheral stalk is formed by the delta and b chains.

It is found in the cell inner membrane. The catalysed reaction is ATP + H2O + 4 H(+)(in) = ADP + phosphate + 5 H(+)(out). In terms of biological role, produces ATP from ADP in the presence of a proton gradient across the membrane. The alpha chain is a regulatory subunit. This is ATP synthase subunit alpha from Afipia carboxidovorans (strain ATCC 49405 / DSM 1227 / KCTC 32145 / OM5) (Oligotropha carboxidovorans).